The chain runs to 1052 residues: 3-hydroxy-3-methylglutaryl coenzyme A reductase mokG (1052 aa).

A run of 6 helical transmembrane segments spans residues 223-243 (VDMA…VSLF), 253-273 (FWLA…GLGV), 279-299 (VPVD…TVGF), 349-369 (GWSI…GAVF), 378-398 (FCFL…TFYA), and 440-460 (WKLI…SSFF). Residues 224–403 (DMAIIGLGYL…FTFYATILCV (180 aa)) enclose the SSD domain. Residues 461–617 (YRIMGGFMTN…FKANQAESLT (157 aa)) are linker. Positions 571-594 (APKESAAPAPPSSPASVPSAVPVP) are disordered. Residues 584-594 (PASVPSAVPVP) show a composition bias toward low complexity. Residues 618–1044 (DDELAELCLR…LVNAHMRHNR (427 aa)) are catalytic. Residue E734 is the Charge relay system of the active site. Residue N798 is glycosylated (N-linked (GlcNAc...) asparagine). Residues K867 and D943 each act as charge relay system in the active site. Catalysis depends on H1039, which acts as the Proton donor. N1043 carries N-linked (GlcNAc...) asparagine glycosylation.

Belongs to the HMG-CoA reductase family.

It localises to the endoplasmic reticulum membrane. It catalyses the reaction (R)-mevalonate + 2 NADP(+) + CoA = (3S)-3-hydroxy-3-methylglutaryl-CoA + 2 NADPH + 2 H(+). It participates in polyketide biosynthesis; lovastatin biosynthesis. Functionally, HMG-CoA reductase; part of the gene cluster that mediates the biosynthesis of monakolin K, also known as lovastatin, and which acts as a potent competitive inhibitor of HMG-CoA reductase. Monakolin K biosynthesis is performed in two stages. The first stage is catalyzed by the nonaketide synthase mokA, which belongs to type I polyketide synthases and catalyzes the iterative nine-step formation of the polyketide. This PKS stage is completed by the action of dehydrogenase mokE, which catalyzes the NADPH-dependent reduction of the unsaturated tetra-, penta- and heptaketide intermediates that arise during the mokA-mediated biosynthesis of the nonaketide chain and leads to dihydromonacolin L. Covalently bound dihydromonacolin L is released from mokA by the mokD esterase. Conversion of dihydromonacolin L into monacolin L and then monacolin J is subsequently performed with the participation of molecular oxygen and P450 monoogygenase mokC. Finally, mokF performs the conversion of monacoline J to monacoline K through the addition of the side-chain diketide moiety (2R)-2-methylbutanoate produced by the diketide synthase mokB. HMG-CoA reductase mokG may act as a down-regulator of monacolin K production. The sequence is that of 3-hydroxy-3-methylglutaryl coenzyme A reductase mokG from Monascus pilosus (Red mold).